The following is a 343-amino-acid chain: Tribbles homolog 2 (343 aa).

Residues 25 to 50 (EELSSIRSAEPSQSFSPNLGSPSPPE) are disordered. Polar residues predominate over residues 29 to 45 (SIRSAEPSQSFSPNLGS). Residues 61–308 (IGKYLLLEPL…SQEILDHPWF (248 aa)) enclose the Protein kinase domain.

Belongs to the protein kinase superfamily. CAMK Ser/Thr protein kinase family. Tribbles subfamily. In terms of tissue distribution, expressed in granulosa cells of the dominant follicles of the ovary and down-regulated in ovulatory follicles.

The protein resides in the cytoplasm. The protein localises to the cytoskeleton. Interacts with MAPK kinases and regulates activation of MAP kinases. Does not display kinase activity. This is Tribbles homolog 2 from Bos taurus (Bovine).